A 100-amino-acid chain; its full sequence is Small ribosomal subunit protein uS14c (100 aa).

This sequence belongs to the universal ribosomal protein uS14 family. As to quaternary structure, part of the 30S ribosomal subunit.

It localises to the plastid. It is found in the chloroplast. Its function is as follows. Binds 16S rRNA, required for the assembly of 30S particles. This Lotus japonicus (Lotus corniculatus var. japonicus) protein is Small ribosomal subunit protein uS14c.